Consider the following 393-residue polypeptide: SET domain-containing protein DDB_G0283443 (393 aa).

An SET domain is found at 17–312 (KKIEINETLE…KGDELSISYI (296 aa)).

The protein belongs to the class V-like SAM-binding methyltransferase superfamily.

In terms of biological role, probable methyltransferase. This Dictyostelium discoideum (Social amoeba) protein is SET domain-containing protein DDB_G0283443.